Consider the following 556-residue polypeptide: Formate--tetrahydrofolate ligase (556 aa).

65 to 72 (TPAGEGKT) contacts ATP.

This sequence belongs to the formate--tetrahydrofolate ligase family.

The enzyme catalyses (6S)-5,6,7,8-tetrahydrofolate + formate + ATP = (6R)-10-formyltetrahydrofolate + ADP + phosphate. It participates in one-carbon metabolism; tetrahydrofolate interconversion. This chain is Formate--tetrahydrofolate ligase, found in Peptoclostridium acidaminophilum (Eubacterium acidaminophilum).